Here is a 210-residue protein sequence, read N- to C-terminus: Large ribosomal subunit protein uL4 (210 aa).

Residues 41–51 (QNNARQGNASA) are compositionally biased toward polar residues. Residues 41–77 (QNNARQGNASAKTRAEVRGGGRKPWKQKGTGRARAGS) form a disordered region. The span at 60 to 71 (GGRKPWKQKGTG) shows a compositional bias: basic residues.

It belongs to the universal ribosomal protein uL4 family. Part of the 50S ribosomal subunit.

One of the primary rRNA binding proteins, this protein initially binds near the 5'-end of the 23S rRNA. It is important during the early stages of 50S assembly. It makes multiple contacts with different domains of the 23S rRNA in the assembled 50S subunit and ribosome. In terms of biological role, forms part of the polypeptide exit tunnel. This is Large ribosomal subunit protein uL4 from Synechocystis sp. (strain ATCC 27184 / PCC 6803 / Kazusa).